Here is a 469-residue protein sequence, read N- to C-terminus: Pancreatic lipase-related protein 2 (469 aa).

A signal peptide spans 1–17 (MLPPWTLGLLLLATVRG). A disulfide bond links cysteine 21 and cysteine 27. A required for galactolipase activity region spans residues 93–105 (IHGFLDKAEDSWP). A disulfide bridge connects residues cysteine 109 and cysteine 120. Catalysis depends on serine 171, which acts as the Nucleophile. Aspartate 195 (charge relay system) is an active-site residue. Glutamate 206, arginine 209, aspartate 211, and aspartate 214 together coordinate Ca(2+). Residues cysteine 256 and cysteine 280 are joined by a disulfide bond. Residues 257–279 (KKNVLSTITDIDGIWEGIGGFVS) form a required for galactolipase activity region. The Charge relay system role is filled by histidine 282. Intrachain disulfides connect cysteine 304-cysteine 315 and cysteine 318-cysteine 323. 2 N-linked (GlcNAc...) asparagine glycosylation sites follow: asparagine 353 and asparagine 428. The region spanning 357-469 (WRYKISVTLS…ENVLQSLYPC (113 aa)) is the PLAT domain. Cysteines 453 and 469 form a disulfide.

Belongs to the AB hydrolase superfamily. Lipase family. As to expression, pancreas.

Its subcellular location is the secreted. The protein localises to the zymogen granule membrane. It is found in the cell projection. It localises to the neuron projection. It carries out the reaction a triacylglycerol + H2O = a diacylglycerol + a fatty acid + H(+). It catalyses the reaction a 1,2-diacyl-3-O-(beta-D-galactosyl)-sn-glycerol + 2 H2O = 3-beta-D-galactosyl-sn-glycerol + 2 a fatty acid + 2 H(+). The enzyme catalyses 1,2,3-tri-(9Z-octadecenoyl)-glycerol + H2O = di-(9Z)-octadecenoylglycerol + (9Z)-octadecenoate + H(+). The catalysed reaction is di-(9Z)-octadecenoylglycerol + H2O = (9Z-octadecenoyl)-glycerol + (9Z)-octadecenoate + H(+). It carries out the reaction (9Z-octadecenoyl)-glycerol + H2O = glycerol + (9Z)-octadecenoate + H(+). It catalyses the reaction 1-(9Z-octadecenoyl)-glycerol + H2O = glycerol + (9Z)-octadecenoate + H(+). The enzyme catalyses 1,2,3-tripropanoylglycerol + H2O = dipropanoylglycerol + propanoate + H(+). The catalysed reaction is 1,2,3-tributanoylglycerol + H2O = dibutanoylglycerol + butanoate + H(+). It carries out the reaction 1,2,3-trioctanoylglycerol + H2O = dioctanoylglycerol + octanoate + H(+). It catalyses the reaction 1,2-didecanoylglycerol + H2O = decanoylglycerol + decanoate + H(+). The enzyme catalyses long chain 1,2-diacyl-3-O-beta-D-galactosyl-sn-glycerol + H2O = long chain acyl-3-O-beta-D-galactosyl-sn-glycerol + a fatty acid + H(+). The catalysed reaction is 1,2-dioctanoyl-3-O-beta-D-galactosyl-sn-glycerol + H2O = octanoyl-3-(beta-D-galactosyl)-sn-glycerol + octanoate + H(+). It carries out the reaction 1,2-didodecanoyl-3-beta-D-galactosyl-sn-glycerol + H2O = dodecanoyl-3-beta-D-galactosyl-sn-glycerol + dodecanoate + H(+). It catalyses the reaction 1-beta-D-galactosyl-2,3-didodecanoyl-sn-glycerol + H2O = 1-beta-D-galactosyl-dodecanoyl-sn-glycerol + dodecanoate + H(+). The enzyme catalyses a 1,2-diacyl-3-O-[alpha-D-galactosyl-(1-&gt;6)-beta-D-galactosyl]-sn-glycerol + H2O = acyl-3-O-[alpha-D-galactosyl-(1-&gt;6)-beta-D-galactosyl]-sn-glycerol + a fatty acid + H(+). The catalysed reaction is long chain 1,2-diacyl-3-O-[alpha-D-galactosyl-(1-&gt;6)-beta-D-galactosyl]-sn-glycerol + H2O = long chain acyl-3-O-[alpha-D-galactosyl-(1-&gt;6)-beta-D-galactosyl]-sn-glycerol + a fatty acid + H(+). It carries out the reaction 1,2-dioctanoyl-3-O-[alpha-D-galactosyl-(1-&gt;6)-beta-D-galactosyl]-sn-glycerol + H2O = octanoyl-3-O-[alpha-D-galactosyl-(1-&gt;6)-beta-D-galactosyl]-sn-glycerol + octanoate + H(+). It catalyses the reaction 1,2-didodecanoyl-3-O-[alpha-D-galactosyl-(1-&gt;6)-beta-D-galactosyl]-sn-glycerol + H2O = dodecanoyl-3-O-[alpha-D-galactosyl-(1-&gt;6)-beta-D-galactosyl]-sn-glycerol + dodecanoate + H(+). The enzyme catalyses a 1,2-diacyl-sn-glycero-3-phosphocholine + H2O = a monoacyl-sn-glycero-3-phosphocholine + a fatty acid + H(+). It functions in the pathway glycerolipid metabolism; triacylglycerol degradation. Its pathway is glycolipid metabolism. With respect to regulation, regulated by CLPS and bile salts levels ranging 1-5 mM in neonates and 2-30 mM in healthy adults. CLPS stimulates milk fat digestion in the presence of 4 mM bile salts. Triacylglycerol lipase activity toward short- and medium-chain triglycerides is inhibited by increasing concentrations of bile salts and weakly reactivated by CLPS. Optimal triacylglycerol lipase activity is reached at bile salts concentrations ranging from 0.1 to 0.5 mM and then decreases at concentrations higher than 1 mM. Lipase activity toward long-chain glycerolipids is stimulated by CLPS in the presence of 4 mM bile salts. Galactolipase activity is inhibited at high concentrations of bile salts. Triacylglycerol lipase activity is inhibited by anti-obesity drug tetrahydrolipstatin. Lipase that primarily hydrolyzes triglycerides and galactosylglycerides. In neonates, may play a major role in pancreatic digestion of dietary fats such as milk fat globules enriched in long-chain triglycerides. Hydrolyzes short-, medium- and long-chain fatty acyls in triglycerides without apparent positional specificity. Can completely deacylate triacylglycerols. When the liver matures and bile salt synthesis increases, likely functions mainly as a galactolipase and monoacylglycerol lipase. Hydrolyzes monogalactosyldiglycerols (MGDG) and digalactosyldiacylglycerols (DGDG) present in a plant-based diet, releasing long-chain polyunsaturated fatty acids. Hydrolyzes medium- and long-chain fatty acyls in galactolipids. May act together with LIPF to hydrolyze partially digested triglycerides. Hydrolyzes long-chain monoglycerides with high efficiency. In cytotoxic T cells, contributes to perforin-dependent cell lysis, but is unlikely to mediate direct cytotoxicity. Also has low phospholipase activity. In neurons, required for the localization of the phospholipid 1-oleoyl-2-palmitoyl-PC (OPPC) to neurite tips through acyl chain remodeling of membrane phospholipids. The resulting OPPC-rich lipid membrane domain recruits the t-SNARE protein STX4 by selectively interacting with the STX4 transmembrane domain and this promotes surface expression of the dopamine transporter SLC6A3/DAT at neurite tips by facilitating fusion of SLC6A3-containing transport vesicles with the plasma membrane. This chain is Pancreatic lipase-related protein 2, found in Homo sapiens (Human).